A 310-amino-acid chain; its full sequence is CCR4-NOT transcription complex subunit 7 (310 aa).

A divalent metal cation contacts are provided by aspartate 51, glutamate 53, aspartate 172, and aspartate 245.

Belongs to the CAF1 family. In terms of assembly, component of the CCR4-NOT complex at least composed of ccf-1, ccr-4 and let-711, which is required for germ cell development in hermaphrodites. Within the complex interacts with let-711. In terms of tissue distribution, highly expressed in the germline. In particular, highly expressed in germ cells that enter meiosis and progress through the pachytene stage.

Its subcellular location is the nucleus. The protein localises to the cytoplasm. The catalysed reaction is Exonucleolytic cleavage of poly(A) to 5'-AMP.. Its function is as follows. Catalytic component of the CCR4-NOT complex which is one of the major cellular mRNA deadenylases and is linked to various cellular processes including bulk mRNA degradation, miRNA-mediated repression, translational repression during translational initiation and general transcription regulation. Within the complex, plays a role in miRNA-mediated deadenylation in embryos. Within the complex promotes germ cell development and fertility in hermaphrodites. Additional complex functions may be a consequence of its influence on mRNA expression. The sequence is that of CCR4-NOT transcription complex subunit 7 from Caenorhabditis elegans.